The sequence spans 197 residues: Holliday junction branch migration complex subunit RuvA (197 aa).

Residues 1–64 form a domain I region; it reads MIALLRGLVV…EDVLALYGFL (64 aa). A domain II region spans residues 65-143; the sequence is TQDEKALFEK…AATGEEPGAP (79 aa). The flexible linker stretch occupies residues 144-153; sequence AAEALSPIDQ. The domain III stretch occupies residues 153 to 197; it reads QDVLSALLNLGCARPQAEAAVRKAKAAGASLDFEPLFRRALELVR.

The protein belongs to the RuvA family. Homotetramer. Forms an RuvA(8)-RuvB(12)-Holliday junction (HJ) complex. HJ DNA is sandwiched between 2 RuvA tetramers; dsDNA enters through RuvA and exits via RuvB. An RuvB hexamer assembles on each DNA strand where it exits the tetramer. Each RuvB hexamer is contacted by two RuvA subunits (via domain III) on 2 adjacent RuvB subunits; this complex drives branch migration. In the full resolvosome a probable DNA-RuvA(4)-RuvB(12)-RuvC(2) complex forms which resolves the HJ.

The protein localises to the cytoplasm. Functionally, the RuvA-RuvB-RuvC complex processes Holliday junction (HJ) DNA during genetic recombination and DNA repair, while the RuvA-RuvB complex plays an important role in the rescue of blocked DNA replication forks via replication fork reversal (RFR). RuvA specifically binds to HJ cruciform DNA, conferring on it an open structure. The RuvB hexamer acts as an ATP-dependent pump, pulling dsDNA into and through the RuvAB complex. HJ branch migration allows RuvC to scan DNA until it finds its consensus sequence, where it cleaves and resolves the cruciform DNA. This is Holliday junction branch migration complex subunit RuvA from Solibacter usitatus (strain Ellin6076).